Here is a 356-residue protein sequence, read N- to C-terminus: Outer spore wall protein LDS2 (356 aa).

Residues 1–92 lie on the Cytoplasmic side of the membrane; it reads MSTRPQPDWY…ISESVGNSDY (92 aa). A helical membrane pass occupies residues 93-113; it reads LHLFFLIFGYYLLNLLLIVAF. Over 114–115 the chain is Extracellular; sequence TS. The helical transmembrane segment at 116 to 136 threads the bilayer; sequence ILAWSLLVCIYLPFLGLFALP. Residues 137–213 lie on the Cytoplasmic side of the membrane; that stretch reads LAYMQTILIS…KRFYLVSLPQ (77 aa). The chain crosses the membrane as a helical span at residues 214-234; sequence FFIFFFWYIFIAFMFLLLLLV. The Extracellular segment spans residues 235–294; it reads PIVGPITINMLPFSPGMGFYYFEPYFVDVLHLDSRKLSKVYYKGFAKWLLYSISSGLLES. A helical transmembrane segment spans residues 295–315; it reads IPILGGLFIGTNAVGASLWIV. The Cytoplasmic segment spans residues 316 to 356; the sequence is KEIKDRDQPAVPPSPPAEPEEPTVGSYAPPIQQSIAHINPP. The segment at 322–356 is disordered; sequence DQPAVPPSPPAEPEEPTVGSYAPPIQQSIAHINPP. Positions 346–356 are enriched in polar residues; the sequence is IQQSIAHINPP.

It belongs to the LDS family.

It is found in the prospore membrane. Its subcellular location is the lipid droplet. It localises to the spore wall. Its function is as follows. Involved in spore wall assembly. This chain is Outer spore wall protein LDS2, found in Saccharomyces cerevisiae (strain ATCC 204508 / S288c) (Baker's yeast).